We begin with the raw amino-acid sequence, 501 residues long: Proline--tRNA ligase (501 aa).

It belongs to the class-II aminoacyl-tRNA synthetase family.

The enzyme catalyses tRNA(Pro) + L-proline + ATP = L-prolyl-tRNA(Pro) + AMP + diphosphate. The polypeptide is Proline--tRNA ligase (Encephalitozoon cuniculi (strain GB-M1) (Microsporidian parasite)).